We begin with the raw amino-acid sequence, 224 residues long: UPF0758 protein CBUD_1789 (224 aa).

In terms of domain architecture, MPN spans 102–224 (QLGCTQDAQQ…SFSFAESGLL (123 aa)). Residues His-173, His-175, and Asp-186 each contribute to the Zn(2+) site. Positions 173 to 186 (HNHPSGVPDPSQAD) match the JAMM motif motif.

Belongs to the UPF0758 family.

This chain is UPF0758 protein CBUD_1789, found in Coxiella burnetii (strain Dugway 5J108-111).